A 965-amino-acid chain; its full sequence is MALTLTPTSSVHLLSSISVARPRIFAADFNLRSRWRRRRPVTSISNFRLRLPSKTSLHCLCSSSSASSPMSLEVSSPNSQFLDCLIYSRAYWVTQGVIAWNVDVGEGSCYFYASKSAGLSFSEDGIDGYDLRIKLEAESGSLPADVIEKFPHIRNYKSFKVPKDLDIRDLVKSQLAVVCFDAEGRLIQGTGLQLPGVLDELFSYDGPLGAHFTPEGVSLHLWAPTAQAVSVCIYKNPLDKSPMEICPLKEANGVWSTEGACSWGGCYYVYKVSVYHPSTMKLETCYANDPYARGLSADGRKTFLVNLDSDDLKPEGWDNLADKKPCLRSFSDISIYELHVRDFSANDETVEPENRGGYLAFTSKDSAGVKHLQKLVDAGLTHLHLLPTFQFGDVDDEKENWKSVDTSLLEGLRPDSTEAQARITEIQNDDGYNWGYNPVLWGVPKGSYASDPTGPCRIIEFRKMVQALNCTGLNVVLDVVYNHLHASGPHDKESVLDKIVPGYYLRRNSDGFIENSTCVNNTASEHYMVDRLIRDDLLNWVVNYKVDGFRFDLMGHIMKATIVNAKSAIGSLRKETDGVDGSRIYLYGEGWNFGEVAENGRGINASQFNLGGTGIGSFNDRIRDATLGGSPFGHPLQQGFITGLLLQPNAHDHGSEATQELMLSTAKNHIQTGMAANLKDYMLTNHEGKEVKGSEVLMHDATPVAYASLPTETINYVSAHDNETLFDIISLKTPMEISVDERCRINHLASSMIALSQGIPFFHAGDEILRSKSLDRDSYNSGDWFNRLDFSYSSNNWGVGLPPKGKNEHNWPLIKPRLQDPSFKPKSSHIVATLHNFLDLLRIRYSSPLFRLDTARAIQERVRFHNTGPSSIPGAIVMSIEDGHRGIPSVSQIDPIYSLIVVIFNARPSEFSYPSPALKDRKLELHPVQVMSADEIVKKSVYDSFSGGFTVPARTTTVFVESRNG.

A chloroplast-targeting transit peptide spans 1–62; that stretch reads MALTLTPTSS…SKTSLHCLCS (62 aa). The active-site Nucleophile is Asp-552. Glu-589 (proton donor) is an active-site residue.

This sequence belongs to the glycosyl hydrolase 13 family.

The protein resides in the plastid. Its subcellular location is the chloroplast stroma. The enzyme catalyses Hydrolysis of (1-&gt;6)-alpha-D-glucosidic linkages in alpha- and beta-limit dextrins of amylopectin and glycogen, and in amylopectin and pullulan.. The protein operates within glycan biosynthesis; starch biosynthesis. It functions in the pathway glycan degradation; starch degradation. Its function is as follows. Involved in starch degradation and also probably in the trimming of pre-amylopectin chains during starch synthesis. The sequence is that of Pullulanase 1, chloroplastic (PU1) from Arabidopsis thaliana (Mouse-ear cress).